We begin with the raw amino-acid sequence, 424 residues long: Hemagglutinin-esterase (424 aa).

Residues 1-16 form the signal peptide; sequence MFLLPRFVLVSCIIGS. The esterase domain 1 stretch occupies residues 7–127; that stretch reads FVLVSCIIGS…SNDIWMQNKG (121 aa). Topologically, residues 17 to 392 are virion surface; it reads LGFDNPPTNV…PICVYDPLPI (376 aa). Ser-40 serves as the catalytic Nucleophile. A disulfide bridge links Cys-44 with Cys-65. 5 N-linked (GlcNAc...) asparagine; by host glycosylation sites follow: Asn-54, Asn-89, Asn-153, Asn-236, and Asn-301. 3 disulfide bridges follow: Cys-113–Cys-162, Cys-197–Cys-276, and Cys-205–Cys-249. A receptor binding region spans residues 128-266; it reads LFYTQVYKNM…GNYLAISNEL (139 aa). The segment at 267 to 379 is esterase domain 2; that stretch reads LLTVPTKAIC…RCPTAADINT (113 aa). An intrachain disulfide couples Cys-307 to Cys-312. N-linked (GlcNAc...) asparagine; by host glycosylation occurs at Asn-316. Catalysis depends on charge relay system residues Asp-326 and His-329. Cys-347 and Cys-371 are joined by a disulfide. Asn-358 carries an N-linked (GlcNAc...) asparagine; by host glycan. The helical transmembrane segment at 393–413 threads the bilayer; it reads ILLGILLGVAVIIIVVLLLYF. Over 414-424 the chain is Intravirion; that stretch reads MVDNGTRLHDA. Asn-417 carries an N-linked (GlcNAc...) asparagine; by host glycan.

Belongs to the influenza type C/coronaviruses hemagglutinin-esterase family. As to quaternary structure, homodimer; disulfide-linked. Forms a complex with the M protein in the pre-Golgi. Associates then with S-M complex to form a ternary complex S-M-HE. N-glycosylated in the host RER.

It localises to the virion membrane. The protein localises to the host cell membrane. It catalyses the reaction N-acetyl-9-O-acetylneuraminate + H2O = N-acetylneuraminate + acetate + H(+). The enzyme catalyses N-acetyl-4-O-acetylneuraminate + H2O = N-acetylneuraminate + acetate + H(+). Functionally, structural protein that makes short spikes at the surface of the virus. Contains receptor binding and receptor-destroying activities. Mediates de-O-acetylation of N-acetyl-4-O-acetylneuraminic acid, which is probably the receptor determinant recognized by the virus on the surface of erythrocytes and susceptible cells. This receptor-destroying activity is important for virus release as it probably helps preventing self-aggregation and ensures the efficient spread of the progeny virus from cell to cell. May serve as a secondary viral attachment protein for initiating infection, the spike protein being the major one. May become a target for both the humoral and the cellular branches of the immune system. This Bovine coronavirus (strain 98TXSF-110-LUN) (BCoV-LUN) protein is Hemagglutinin-esterase.